A 560-amino-acid polypeptide reads, in one-letter code: Cytosolic purine 5'-nucleotidase (560 aa).

The Nucleophile role is filled by D52. IMP contacts are provided by D52 and D54. Mg(2+) contacts are provided by D52 and D54. The Proton donor role is filled by D54. Residues R144 and N154 each coordinate ATP. IMP-binding residues include R202, D206, K215, T249, N250, S251, and K292. D351 is a Mg(2+) binding site. S418 is modified (phosphoserine). 2 residues coordinate ATP: Q453 and R456. Phosphoserine occurs at positions 502, 511, and 527. The disordered stretch occupies residues 541–560 (PQEITHCHDEDDDEEEEEEE). The interval 548–560 (HDEDDDEEEEEEE) is required for tetramer assembly. Residues 550-560 (EDDDEEEEEEE) are compositionally biased toward acidic residues.

Belongs to the 5'(3')-deoxyribonucleotidase family. Homotetramer. Mg(2+) is required as a cofactor.

The protein resides in the cytoplasm. Its subcellular location is the cytosol. It carries out the reaction a ribonucleoside 5'-phosphate + H2O = a ribonucleoside + phosphate. It catalyses the reaction a 2'-deoxyribonucleoside + a ribonucleoside 5'-phosphate = a ribonucleoside + a 2'-deoxyribonucleoside 5'-phosphate. The catalysed reaction is IMP + H2O = inosine + phosphate. The enzyme catalyses GMP + H2O = guanosine + phosphate. It carries out the reaction dIMP + H2O = 2'-deoxyinosine + phosphate. It catalyses the reaction dGMP + H2O = 2'-deoxyguanosine + phosphate. The catalysed reaction is XMP + H2O = xanthosine + phosphate. The enzyme catalyses inosine + GMP = guanosine + IMP. It carries out the reaction dGMP + inosine = 2'-deoxyguanosine + IMP. It catalyses the reaction dIMP + inosine = 2'-deoxyinosine + IMP. The catalysed reaction is inosine + UMP = uridine + IMP. The enzyme catalyses inosine + CMP = cytidine + IMP. It carries out the reaction inosine + AMP = IMP + adenosine. With respect to regulation, allosterically activated by various compounds including ATP, 2,3-BPG/2,3-Bisphosphoglyceric acid and Ap4A/P1,P4-bis(5'-adenosyl) tetraphosphate. Binding of an allosteric activator is a prerequisiste to magnesium and substrate binding. Inhibited by inorganic phosphate. Its function is as follows. Broad specificity cytosolic 5'-nucleotidase that catalyzes the dephosphorylation of 6-hydroxypurine nucleoside 5'-monophosphates. In addition, possesses a phosphotransferase activity by which it can transfer a phosphate from a donor nucleoside monophosphate to an acceptor nucleoside, preferably inosine, deoxyinosine and guanosine. Has the highest activities for IMP and GMP followed by dIMP, dGMP and XMP. Could also catalyze the transfer of phosphates from pyrimidine monophosphates but with lower efficiency. Through these activities regulates the purine nucleoside/nucleotide pools within the cell. The sequence is that of Cytosolic purine 5'-nucleotidase from Rattus norvegicus (Rat).